Here is a 262-residue protein sequence, read N- to C-terminus: ABSCISIC ACID-INSENSITIVE 5-like protein 3 (262 aa).

Residues Ser-21, Ser-43, and Ser-66 each carry the phosphoserine modification. A Phosphothreonine modification is found at Thr-104. The bZIP domain occupies 190 to 253 (VERRQKRMIK…SEPPPDPKWK (64 aa)). The segment at 192 to 211 (RRQKRMIKNRESAARSRARK) is basic motif. Positions 218 to 232 (LEIKVSRLEEENEKL) are leucine-zipper. Positions 239 to 252 (EKILPSEPPPDPKW) are enriched in basic and acidic residues. The disordered stretch occupies residues 239-262 (EKILPSEPPPDPKWKLRRTNSASL).

The protein belongs to the bZIP family. ABI5 subfamily. In terms of assembly, DNA-binding heterodimer with ABI5/DPBF1, DPBF2 or AREB3/DPBF3. Interacts with the AFP proteins AFP2, AFP3 and AFP4. In terms of tissue distribution, predominantly expressed in seeds.

It localises to the nucleus. Its function is as follows. Binds to the embryo specification element and the ABA-responsive element (ABRE) of the Dc3 gene promoter and to the ABRE of the Em1 gene promoter. Could participate in abscisic acid-regulated gene expression during seed development. This chain is ABSCISIC ACID-INSENSITIVE 5-like protein 3 (DPBF4), found in Arabidopsis thaliana (Mouse-ear cress).